We begin with the raw amino-acid sequence, 340 residues long: Protein LSM14 homolog car-1 (340 aa).

Residues 1–81 (MSNQTPYIGS…IKDLIVCDTP (81 aa)) form the Sm domain. The segment covering 101–125 (SRSAPASDGAPAASAGSSRAGTPSR) has biased composition (low complexity). Residues 101-148 (SRSAPASDGAPAASAGSSRAGTPSRNSPLGQIIQNQRPGRGGYQQNFQ) are disordered. Residues 126-148 (NSPLGQIIQNQRPGRGGYQQNFQ) show a composition bias toward polar residues. The DFDF domain occupies 178-214 (VNHREKLKFESDFDFEKANEKFQEVLVDNLEKLNIED). Residues 227 to 243 (AFYDKKTSFFDNISCES) carry the FFD box motif. Positions 251-271 (TGRPDWKKERETNQETFGHNA) match the TFG box motif. Residues 277-340 (YRRGFGGRGR…QGNTAAAAEQ (64 aa)) are disordered. A compositionally biased stretch (gly residues) spans 280 to 296 (GFGGRGRGGNRGYGGYN). Low complexity predominate over residues 312 to 325 (GYRQNNGGYRRGGY).

Belongs to the LSM14 family.

It is found in the nucleus. Transcriptional regulator. Involved in modulating embryonic expression of ATP-dependent chaperone cdc-48.1. May play a role in mRNA gene silencing, and RNA granule (P-body) assembly. The protein is Protein LSM14 homolog car-1 of Caenorhabditis elegans.